The following is a 129-amino-acid chain: Small ribosomal subunit protein uS11 (129 aa).

This sequence belongs to the universal ribosomal protein uS11 family. In terms of assembly, part of the 30S ribosomal subunit. Interacts with proteins S7 and S18. Binds to IF-3.

Functionally, located on the platform of the 30S subunit, it bridges several disparate RNA helices of the 16S rRNA. Forms part of the Shine-Dalgarno cleft in the 70S ribosome. This Sinorhizobium medicae (strain WSM419) (Ensifer medicae) protein is Small ribosomal subunit protein uS11.